The following is a 145-amino-acid chain: Fatty acid-binding protein homolog 4 (145 aa).

It belongs to the calycin superfamily. Fatty-acid binding protein (FABP) family.

The polypeptide is Fatty acid-binding protein homolog 4 (lbp-4) (Caenorhabditis elegans).